Reading from the N-terminus, the 245-residue chain is Mitochondrial import inner membrane translocase subunit Tim21 (245 aa).

A mitochondrion-targeting transit peptide spans 1–18; the sequence is MICAFLRVVRHAEKLHGS. A disordered region spans residues 64–97; the sequence is FWTQGPDPRKAKEDSSKQVSINRNQREETGVSTS. Residues 70–79 are compositionally biased toward basic and acidic residues; sequence DPRKAKEDSS. Residues 108 to 128 form a helical membrane-spanning segment; that stretch reads TYLIVVLFGVSITGSLLYTIF.

This sequence belongs to the TIM21 family. As to quaternary structure, component of the TIM23 complex. Component of the MITRAC (mitochondrial translation regulation assembly intermediate of cytochrome c oxidase complex) complex, the core components of this complex being COA3/MITRAC12 and COX14. Interacts with COA3 and MT-CO1/COX1.

The protein localises to the mitochondrion membrane. In terms of biological role, participates in the translocation of transit peptide-containing proteins across the mitochondrial inner membrane. Also required for assembly of mitochondrial respiratory chain complex I and complex IV as component of the MITRAC (mitochondrial translation regulation assembly intermediate of cytochrome c oxidase complex) complex. Probably shuttles between the presequence translocase and respiratory-chain assembly intermediates in a process that promotes incorporation of early nuclear-encoded subunits into these complexes. In Rattus norvegicus (Rat), this protein is Mitochondrial import inner membrane translocase subunit Tim21 (Timm21).